A 1315-amino-acid polypeptide reads, in one-letter code: DNA-directed RNA polymerase subunit beta' (1315 aa).

Zn(2+)-binding residues include Cys-60, Cys-62, Cys-75, and Cys-78. Residues Asp-535, Asp-537, and Asp-539 each contribute to the Mg(2+) site. Zn(2+)-binding residues include Cys-890, Cys-967, Cys-974, and Cys-977.

This sequence belongs to the RNA polymerase beta' chain family. The RNAP catalytic core consists of 2 alpha, 1 beta, 1 beta' and 1 omega subunit. When a sigma factor is associated with the core the holoenzyme is formed, which can initiate transcription. It depends on Mg(2+) as a cofactor. Zn(2+) serves as cofactor.

It carries out the reaction RNA(n) + a ribonucleoside 5'-triphosphate = RNA(n+1) + diphosphate. DNA-dependent RNA polymerase catalyzes the transcription of DNA into RNA using the four ribonucleoside triphosphates as substrates. In Mycobacterium sp. (strain MCS), this protein is DNA-directed RNA polymerase subunit beta'.